Reading from the N-terminus, the 489-residue chain is Glutamate--tRNA ligase (489 aa).

The 'HIGH' region signature appears at 12–22 (PSPTGIPHVGM). The short motif at 256 to 260 (KLSKR) is the 'KMSKS' region element. K259 contacts ATP.

Belongs to the class-I aminoacyl-tRNA synthetase family. Glutamate--tRNA ligase type 1 subfamily. As to quaternary structure, monomer.

The protein localises to the cytoplasm. It carries out the reaction tRNA(Glu) + L-glutamate + ATP = L-glutamyl-tRNA(Glu) + AMP + diphosphate. In terms of biological role, catalyzes the attachment of glutamate to tRNA(Glu) in a two-step reaction: glutamate is first activated by ATP to form Glu-AMP and then transferred to the acceptor end of tRNA(Glu). The polypeptide is Glutamate--tRNA ligase (Mycobacterium marinum (strain ATCC BAA-535 / M)).